We begin with the raw amino-acid sequence, 37 residues long: Large ribosomal subunit protein bL36 (37 aa).

It belongs to the bacterial ribosomal protein bL36 family.

The chain is Large ribosomal subunit protein bL36 from Alkalilimnicola ehrlichii (strain ATCC BAA-1101 / DSM 17681 / MLHE-1).